Reading from the N-terminus, the 566-residue chain is Lamin-1 (566 aa).

Positions Met1–Leu37 are disordered. Ser2 carries the N-acetylserine modification. The segment at Val13–Asp47 is head. Residues Glu45–Leu387 enclose the IF rod domain. The tract at residues His48–Val82 is coil 1A. A linker 1 region spans residues Val83 to Arg94. A coil 1B region spans residues Phe95–Glu228. Residues Leu229–Gln256 form a linker 2 region. The interval Asp257 to Glu385 is coil 2. The tail stretch occupies residues Arg386–Met566. The 116-residue stretch at Arg435–Phe550 folds into the LTD domain. A disordered region spans residues Gly528 to Met566. The segment covering Asp541–Pro556 has biased composition (polar residues). At Cys563 the chain carries Cysteine methyl ester. Residue Cys563 is the site of S-farnesyl cysteine attachment. Residues Ser564–Met566 constitute a propeptide, removed in mature form.

It belongs to the intermediate filament family. As to quaternary structure, interacts with LEM domain proteins lem-2 and emr-1. May interact with unc-84; this interaction may be required to complete the connection between the nuclear lamina and the cytoskeleton. Ubiquitous. Expressed in all cells, except in cells undergoing spermatogenesis.

The protein localises to the nucleus envelope. It is found in the nucleus inner membrane. Functionally, major component of the nuclear lamina, a fibrous layer on the nucleoplasmic side of the inner nuclear membrane. Provides a framework for the nuclear envelope and probably also interacts with chromatin. Essential to maintain the shape and integrity of the nucleus, and for DNA replication. Involved in spatial organization of nuclear pore complexes. It is not a target for ced-3 during apoptosis, suggesting that lamin cleavage is not essential for apoptosis in C.elegans. This Caenorhabditis elegans protein is Lamin-1.